The following is a 227-amino-acid chain: ATP-dependent dethiobiotin synthetase BioD (227 aa).

Residue 13–18 (NIGKTV) participates in ATP binding. Residue threonine 17 participates in Mg(2+) binding. The active site involves lysine 38. ATP-binding positions include aspartate 55 and 116 to 119 (EGIG). Residues aspartate 55 and glutamate 116 each coordinate Mg(2+).

It belongs to the dethiobiotin synthetase family. As to quaternary structure, homodimer. The cofactor is Mg(2+).

Its subcellular location is the cytoplasm. The enzyme catalyses (7R,8S)-7,8-diammoniononanoate + CO2 + ATP = (4R,5S)-dethiobiotin + ADP + phosphate + 3 H(+). It participates in cofactor biosynthesis; biotin biosynthesis; biotin from 7,8-diaminononanoate: step 1/2. Its function is as follows. Catalyzes a mechanistically unusual reaction, the ATP-dependent insertion of CO2 between the N7 and N8 nitrogen atoms of 7,8-diaminopelargonic acid (DAPA, also called 7,8-diammoniononanoate) to form a ureido ring. This is ATP-dependent dethiobiotin synthetase BioD from Buchnera aphidicola subsp. Baizongia pistaciae (strain Bp).